A 343-amino-acid polypeptide reads, in one-letter code: Chlorophyll(ide) b reductase NOL, chloroplastic (343 aa).

The transit peptide at M1 to R54 directs the protein to the chloroplast. I78 to I102 lines the NAD(+) pocket. Y228 (proton acceptor) is an active-site residue.

The protein belongs to the short-chain dehydrogenases/reductases (SDR) family. Interacts with NCY1 to form a complex that acts as a chlorophyll b reductase. Expressed in leaves and stems. Also detected in non-photosynthetic tissues such as roots.

The protein resides in the plastid. It is found in the chloroplast thylakoid membrane. It catalyses the reaction 7(1)-hydroxychlorophyllide a + NAD(+) = chlorophyllide b + NADH + H(+). The catalysed reaction is 7(1)-hydroxychlorophyllide a + NADP(+) = chlorophyllide b + NADPH + H(+). In terms of biological role, required for chlorophyll b degradation. This chain is Chlorophyll(ide) b reductase NOL, chloroplastic (NOL), found in Oryza sativa subsp. japonica (Rice).